A 334-amino-acid polypeptide reads, in one-letter code: Leucine-rich repeat-containing protein 39 (334 aa).

Residues 10–47 (AVNAVKEVWEKRIKKLNEDLKREKEFQQKLVRIWEERV) are a coiled coil. 9 LRR repeats span residues 84-105 (QLQE…IGRF), 107-128 (NLIV…IGLL), 130-151 (RLQE…LSYC), 153-176 (SLEK…SNLL), 177-198 (KLTH…VLNM), 200-221 (ALEW…IERM), 223-244 (NLHT…ISSM), 246-267 (NLST…MEKM), and 269-290 (NLRF…PPSE).

In terms of assembly, interacts with MYH7 (via C-terminus).

The protein localises to the cytoplasm. It is found in the myofibril. The protein resides in the sarcomere. Its subcellular location is the m line. Functionally, component of the sarcomeric M-band which plays a role in myocyte response to biomechanical stress. May regulate expression of other M-band proteins via an SRF-dependent pathway. Important for normal contractile function in heart. In Bos taurus (Bovine), this protein is Leucine-rich repeat-containing protein 39.